The sequence spans 324 residues: Galectin-4 (324 aa).

2 consecutive Galectin domains span residues 19 to 150 (YKRP…INFL) and 196 to 324 (YVGT…YVQI). 257–263 (WGSEERK) contacts a beta-D-galactoside. S259 bears the Phosphoserine mark.

As to quaternary structure, monomer. Highly expressed in full-length form in small and large intestine and stomach but was not detected in other tissues including lung, liver, kidney and spleen.

Its function is as follows. Galectin that binds lactose and a related range of sugars. This is Galectin-4 (Lgals4) from Rattus norvegicus (Rat).